Consider the following 178-residue polypeptide: Gamma-crystallin S (178 aa).

Ser-2 is subject to N-acetylserine. The N-terminal arm stretch occupies residues 2–5; that stretch reads SKAG. Beta/gamma crystallin 'Greek key' domains lie at 6-44 and 45-87; these read TKIT…RVEG and GTWA…RAVH. Residues 88–93 are connecting peptide; that stretch reads LSSGGQ. Beta/gamma crystallin 'Greek key' domains are found at residues 94 to 134 and 135 to 177; these read YKLQ…KVLE and GAWI…RRIV.

This sequence belongs to the beta/gamma-crystallin family. As to quaternary structure, monomer.

Crystallins are the dominant structural components of the vertebrate eye lens. In Bos taurus (Bovine), this protein is Gamma-crystallin S (CRYGS).